The sequence spans 259 residues: UPF0246 protein PFLU_0992 (259 aa).

Belongs to the UPF0246 family.

The sequence is that of UPF0246 protein PFLU_0992 from Pseudomonas fluorescens (strain SBW25).